A 92-amino-acid chain; its full sequence is Defensin (92 aa).

The first 20 residues, 1–20 (MKFFVLVAIAFALLACVAQA), serve as a signal peptide directing secretion. Residues 21 to 52 (QPVSDVDPIPEDHVLVHEDAHQEVLQHSRQKR) constitute a propeptide that is removed on maturation. 3 cysteine pairs are disulfide-bonded: Cys-55–Cys-82, Cys-68–Cys-88, and Cys-72–Cys-90.

This sequence belongs to the invertebrate defensin family. Type 1 subfamily. As to expression, hemolymph (at protein level).

The protein localises to the secreted. Functionally, responsible for the anti Gram-positive activity of immune hemolymph. Expressed in the absence of immune challenge during metamorphosis. This chain is Defensin (Def), found in Drosophila melanogaster (Fruit fly).